Reading from the N-terminus, the 278-residue chain is HTH-type transcriptional activator RhaS (278 aa).

The region spanning 174 to 272 is the HTH araC/xylS-type domain; it reads NLLLAWLEDH…NWSPRDIRQG (99 aa). 2 consecutive DNA-binding regions (H-T-H motif) follow at residues 191–212 and 239–262; these read DAVADQFSLSLRTLHRQLKQQT and VTDIAYRCGFSDSNHFSTLFRREF.

In terms of assembly, binds DNA as a dimer.

The protein resides in the cytoplasm. Functionally, activates expression of the rhaBAD and rhaT operons. The polypeptide is HTH-type transcriptional activator RhaS (Shigella boydii serotype 4 (strain Sb227)).